Reading from the N-terminus, the 404-residue chain is MISNFSRLQNIYNILFILFISLPGGLIYLLTGSTLSFWLRESGFDKITIGLFSLVNFIHIFKFLWGPLLEKISFIPSNSRGYKYCLIFSLLSCICCVYILTGFNPTTNFISFSLCLIILAFFSSIYDMLLQSSQMLLINNKNWGISEAACTSGFRIGILISGSGALYLSTIISWQEVYRTMAILCVPSLLLIIFYPLKFKEKIAVNDFDRFWHAFYDFIKKPKWLIIVGFMLLYRLQDNFLAVMPNMFYLDIGYTKKDLALGYKAFGMCATIAGGFIGGFLCRKYEYTYIFKRVLVYHALSSITFLLLYSYSQTITTLYIAVFLQEFTKGLTMSPFFSYQLRCCSSKYCITQIALITSIAYISTVLFGSISGYAATYLGWGYFFAIASFCFIPAYILIRYLPRV.

12 helical membrane-spanning segments follow: residues 11–31 (IYNI…YLLT), 49–69 (IGLF…GPLL), 84–104 (YCLI…TGFN), 109–129 (FISF…YDML), 154–174 (FRIG…IISW), 177–197 (VYRT…FYPL), 224–244 (WLII…LAVM), 261–281 (LGYK…GGFL), 294–311 (VLVY…LYSY), 315–337 (ITTL…SPFF), 353–373 (IALI…ISGY), and 378–398 (LGWG…YILI).

It belongs to the major facilitator superfamily.

The protein resides in the cell inner membrane. This Rickettsia bellii (strain RML369-C) protein is Putative transporter AmpG 2 (ampG2).